A 145-amino-acid polypeptide reads, in one-letter code: Superoxide dismutase [Mn/Fe] (145 aa).

2 residues coordinate Fe(3+): His10 and His64. Residues His10 and His64 each coordinate Mn(2+).

This sequence belongs to the iron/manganese superoxide dismutase family. It depends on Mn(2+) as a cofactor. The cofactor is Fe(3+).

It carries out the reaction 2 superoxide + 2 H(+) = H2O2 + O2. In terms of biological role, destroys superoxide anion radicals which are normally produced within the cells and which are toxic to biological systems. Catalyzes the dismutation of superoxide anion radicals into O2 and H2O2 by successive reduction and oxidation of the transition metal ion at the active site. The polypeptide is Superoxide dismutase [Mn/Fe] (sodA) (Streptococcus alactolyticus).